A 237-amino-acid polypeptide reads, in one-letter code: Leucyl/phenylalanyl-tRNA--protein transferase (237 aa).

Belongs to the L/F-transferase family.

The protein resides in the cytoplasm. It catalyses the reaction N-terminal L-lysyl-[protein] + L-leucyl-tRNA(Leu) = N-terminal L-leucyl-L-lysyl-[protein] + tRNA(Leu) + H(+). The catalysed reaction is N-terminal L-arginyl-[protein] + L-leucyl-tRNA(Leu) = N-terminal L-leucyl-L-arginyl-[protein] + tRNA(Leu) + H(+). It carries out the reaction L-phenylalanyl-tRNA(Phe) + an N-terminal L-alpha-aminoacyl-[protein] = an N-terminal L-phenylalanyl-L-alpha-aminoacyl-[protein] + tRNA(Phe). Functions in the N-end rule pathway of protein degradation where it conjugates Leu, Phe and, less efficiently, Met from aminoacyl-tRNAs to the N-termini of proteins containing an N-terminal arginine or lysine. This chain is Leucyl/phenylalanyl-tRNA--protein transferase, found in Shewanella baltica (strain OS195).